Reading from the N-terminus, the 468-residue chain is uncharacterized protein (468 aa).

The N-terminal stretch at 1–19 (MRVLSVLLVALTVAGSAYS) is a signal peptide. Residues asparagine 86 and asparagine 334 are each glycosylated (N-linked (GlcNAc...) asparagine). Residues 401-421 (NPSTNLPETSPPTEQPTAPPA) form a disordered region. Over residues 409–421 (TSPPTEQPTAPPA) the composition is skewed to pro residues. A glycan (N-linked (GlcNAc...) asparagine) is linked at asparagine 435. Asparagine 444 is lipidated: GPI-like-anchor amidated asparagine. Positions 445–468 (SASSIEMSKLVVAILSLFILAFFH) are cleaved as a propeptide — removed in mature form.

It is found in the cell membrane. This is an uncharacterized protein from Dictyostelium discoideum (Social amoeba).